We begin with the raw amino-acid sequence, 275 residues long: Large ribosomal subunit protein uL2c (275 aa).

Positions 225 to 259 are disordered; that stretch reads KNPVDHPHGGGEGRAPIGRSTPVTPWGKPALGRRT.

It belongs to the universal ribosomal protein uL2 family. As to quaternary structure, part of the 50S ribosomal subunit.

Its subcellular location is the plastid. The protein localises to the cyanelle. This chain is Large ribosomal subunit protein uL2c (rpl2), found in Cyanophora paradoxa.